The following is a 458-amino-acid chain: Purple acid phosphatase 23 (458 aa).

An N-terminal signal peptide occupies residues Met-1–Ala-19. N-linked (GlcNAc...) asparagine glycosylation is found at Asn-59, Asn-121, and Asn-136. Asp-194 contributes to the Fe cation binding site. Asn-200 carries an N-linked (GlcNAc...) asparagine glycan. Fe cation contacts are provided by Asp-221 and Tyr-224. Position 221 (Asp-221) interacts with Mn(2+). Asn-278 is a binding site for Mn(2+). Asn-278 is a binding site for substrate. N-linked (GlcNAc...) asparagine glycosylation is present at Asn-331. His-360 is a Mn(2+) binding site. His-370 (proton donor) is an active-site residue. Mn(2+) is bound at residue His-397. His-397–His-399 serves as a coordination point for substrate. His-399 is a binding site for Fe cation. N-linked (GlcNAc...) asparagine glycosylation is found at Asn-409 and Asn-455.

The protein belongs to the metallophosphoesterase superfamily. Purple acid phosphatase family. Homodimer. Requires Fe cation as cofactor. Mn(2+) is required as a cofactor. Specifically expressed in flowers.

It localises to the secreted. It catalyses the reaction a phosphate monoester + H2O = an alcohol + phosphate. In terms of biological role, acid phosphatase activity with ATP, ADP, dATP, pyrophosphate, polyphosphate, phosphoserine and phosphothreonine. Low or no activity with phosphotyrosine, AMP and phytate. The sequence is that of Purple acid phosphatase 23 (PAP23) from Arabidopsis thaliana (Mouse-ear cress).